The primary structure comprises 945 residues: Valine--tRNA ligase (945 aa).

Residues 42–52 (PNVTGTLHMGH) carry the 'HIGH' region motif. The short motif at 552 to 556 (KMSKS) is the 'KMSKS' region element. K555 contributes to the ATP binding site. Residues 879-945 (DKAAETARLS…VQNQLAKLKD (67 aa)) are a coiled coil.

Belongs to the class-I aminoacyl-tRNA synthetase family. ValS type 1 subfamily. Monomer.

Its subcellular location is the cytoplasm. It catalyses the reaction tRNA(Val) + L-valine + ATP = L-valyl-tRNA(Val) + AMP + diphosphate. Functionally, catalyzes the attachment of valine to tRNA(Val). As ValRS can inadvertently accommodate and process structurally similar amino acids such as threonine, to avoid such errors, it has a 'posttransfer' editing activity that hydrolyzes mischarged Thr-tRNA(Val) in a tRNA-dependent manner. The sequence is that of Valine--tRNA ligase from Neisseria gonorrhoeae (strain ATCC 700825 / FA 1090).